The sequence spans 146 residues: Protein archease (146 aa).

Residues D16, D145, and I146 each coordinate Ca(2+).

This sequence belongs to the archease family.

In terms of biological role, activates the tRNA-splicing ligase complex by facilitating the enzymatic turnover of catalytic subunit RtcB. Acts by promoting the guanylylation of RtcB, a key intermediate step in tRNA ligation. Can also alter the NTP specificity of RtcB such that ATP, dGTP or ITP is used efficiently. This is Protein archease from Methanosarcina barkeri (strain Fusaro / DSM 804).